Reading from the N-terminus, the 960-residue chain is UPF0182 protein DSY1630 (960 aa).

Transmembrane regions (helical) follow at residues 7–27 (IMLVLLGIGLILFIALSGLFE), 50–70 (IIQIINGTILFTFIAGTLFSI), 105–125 (TLWLIIISVLISFGVSFVTGF), 169–189 (FGPLFFLTFFTIVFYSFAGVI), 212–232 (LALLITVLFLFKGFGCYFDTF), 256–276 (ALKALLVLCALGVIGGGLAFF), and 285–305 (LPILAIFISIPLLSGLGPMVL). 2 disordered regions span residues 866 to 899 (SALAVSPMSAELKPEETEETTEETEEPVDPQEDT) and 924 to 960 (TGDSVDVEGGKKADEDAHDVQTDPEGSVSSEQSKTNP). Positions 881 to 897 (ETEETTEETEEPVDPQE) are enriched in acidic residues. A compositionally biased stretch (basic and acidic residues) spans 931–944 (EGGKKADEDAHDVQ). The span at 950–960 (SVSSEQSKTNP) shows a compositional bias: polar residues.

This sequence belongs to the UPF0182 family.

Its subcellular location is the cell membrane. The polypeptide is UPF0182 protein DSY1630 (Desulfitobacterium hafniense (strain Y51)).